The primary structure comprises 952 residues: Protein translocase subunit SecA (952 aa).

Residues glutamine 135, 153–157 (GEGKT), and aspartate 575 each bind ATP. Basic and acidic residues predominate over residues 614 to 624 (RHESRRIDNQL). Disordered regions lie at residues 614–636 (RHES…DPGS) and 916–946 (VSAK…GKKY). Positions 938, 940, 949, and 950 each coordinate Zn(2+).

This sequence belongs to the SecA family. Monomer and homodimer. Part of the essential Sec protein translocation apparatus which comprises SecA, SecYEG and auxiliary proteins SecDF. Other proteins may also be involved. Requires Zn(2+) as cofactor.

Its subcellular location is the cell membrane. It is found in the cytoplasm. The catalysed reaction is ATP + H2O + cellular proteinSide 1 = ADP + phosphate + cellular proteinSide 2.. Functionally, part of the Sec protein translocase complex. Interacts with the SecYEG preprotein conducting channel. Has a central role in coupling the hydrolysis of ATP to the transfer of proteins into and across the cell membrane, serving as an ATP-driven molecular motor driving the stepwise translocation of polypeptide chains across the membrane. The sequence is that of Protein translocase subunit SecA from Dehalococcoides mccartyi (strain ATCC BAA-2100 / JCM 16839 / KCTC 5957 / BAV1).